The following is a 21-amino-acid chain: Putative NADH dehydrogenase subunit PS9 (21 aa).

This Pinus strobus (Eastern white pine) protein is Putative NADH dehydrogenase subunit PS9.